A 450-amino-acid polypeptide reads, in one-letter code: Regulator of sigma-E protease RseP (450 aa).

A helical membrane pass occupies residues 1–21; sequence MLSFLWDLASFIVALGVLITV. Residue histidine 22 coordinates Zn(2+). Over 22-103 the chain is Periplasmic; the sequence is HEFGHFWVAR…VGQRAAIIAA (82 aa). Residue glutamate 23 is part of the active site. Zn(2+) is bound at residue histidine 26. Residues 104–124 traverse the membrane as a helical segment; that stretch reads GPVANFIFAIFAYWLVFIIGV. Residues 125–375 lie on the Cytoplasmic side of the membrane; the sequence is PGVRPVVGEI…KGAGMTAELG (251 aa). 2 consecutive PDZ domains span residues 127 to 220 and 222 to 309; these read VRPV…PRGP and IEPV…PKVI. Residues 376–396 form a helical membrane-spanning segment; sequence VVYYLPFLALISVNLGIINLF. Over 397 to 429 the chain is Periplasmic; sequence PLPVLDGGHLLFLAIEKIKGGPVSERVQDFCYR. The chain crosses the membrane as a helical span at residues 430 to 450; the sequence is IGSILLVLLMGLALFNDFSRL.

The protein belongs to the peptidase M50B family. As to quaternary structure, interacts with RseA; the third transmembrane domain can be cross-linked to the transmembrane domain of RseA. Zn(2+) serves as cofactor.

The protein localises to the cell inner membrane. With respect to regulation, inhibited by Zn(2+) chelator 1,10-phenanthroline. A site-2 regulated intramembrane protease (S2P) that cleaves the peptide bond between 'Ala-108' and 'Cys-109' in the transmembrane region of RseA. Part of a regulated intramembrane proteolysis (RIP) cascade. Acts on DegS-cleaved RseA to release the cytoplasmic domain of RseA, residue 'Val-148' of RseA may be required for this. This provides the cell with sigma-E (RpoE) activity through the proteolysis of RseA. Can also cleave sequences in transmembrane regions of other proteins (such as LacY) as well as liberated signal peptides of beta-lactamase, OmpF, LivK, SecM, PhoA, LivJ, OmpC, Lpp and TorA, probably within the membrane. Cleaves FecR within its transmembrane region to release an N-terminal cytoplasmic fragment which binds to sigma factor FecI, allowing it to activate transcription of the fecABCDE operon which mediates ferric citrate transport. The protein is Regulator of sigma-E protease RseP (rseP) of Escherichia coli (strain K12).